The sequence spans 280 residues: DegV domain-containing protein SPy_1698/M5005_Spy1391 (280 aa).

Residues 3–280 (WKIVTDSGCD…DGGLLMGYEI (278 aa)) form the DegV domain. Residues S63 and S91 each coordinate hexadecanoate.

In terms of biological role, may bind long-chain fatty acids, such as palmitate, and may play a role in lipid transport or fatty acid metabolism. The polypeptide is DegV domain-containing protein SPy_1698/M5005_Spy1391 (Streptococcus pyogenes serotype M1).